Consider the following 443-residue polypeptide: Histidinol dehydrogenase (443 aa).

NAD(+) is bound by residues Y133, Q191, and N214. Positions 240, 262, and 265 each coordinate substrate. The Zn(2+) site is built by Q262 and H265. Active-site proton acceptor residues include E329 and H330. Residues H330, D363, E417, and H422 each contribute to the substrate site. Residue D363 participates in Zn(2+) binding. Zn(2+) is bound at residue H422.

The protein belongs to the histidinol dehydrogenase family. Homodimer. Zn(2+) is required as a cofactor.

It catalyses the reaction L-histidinol + 2 NAD(+) + H2O = L-histidine + 2 NADH + 3 H(+). Its pathway is amino-acid biosynthesis; L-histidine biosynthesis; L-histidine from 5-phospho-alpha-D-ribose 1-diphosphate: step 9/9. In terms of biological role, catalyzes the sequential NAD-dependent oxidations of L-histidinol to L-histidinaldehyde and then to L-histidine. The protein is Histidinol dehydrogenase of Yersinia pestis.